The sequence spans 428 residues: Protein terminus (428 aa).

The C3H1-type zinc-finger motif lies at 325–346 (CRRCRTQFSRRSKLHIHQKLRC).

This chain is Protein terminus (term), found in Drosophila melanogaster (Fruit fly).